The primary structure comprises 493 residues: Glutamyl-tRNA(Gln) amidotransferase subunit A (493 aa).

Residues K79 and S159 each act as charge relay system in the active site. S183 (acyl-ester intermediate) is an active-site residue.

Belongs to the amidase family. GatA subfamily. Heterotrimer of A, B and C subunits.

The enzyme catalyses L-glutamyl-tRNA(Gln) + L-glutamine + ATP + H2O = L-glutaminyl-tRNA(Gln) + L-glutamate + ADP + phosphate + H(+). Functionally, allows the formation of correctly charged Gln-tRNA(Gln) through the transamidation of misacylated Glu-tRNA(Gln) in organisms which lack glutaminyl-tRNA synthetase. The reaction takes place in the presence of glutamine and ATP through an activated gamma-phospho-Glu-tRNA(Gln). In Sinorhizobium medicae (strain WSM419) (Ensifer medicae), this protein is Glutamyl-tRNA(Gln) amidotransferase subunit A.